We begin with the raw amino-acid sequence, 51 residues long: Lysis protein for colicin A (51 aa).

Positions 1–18 are cleaved as a signal peptide; it reads MKKIIICVILLAIMLLAA. Cysteine 19 is lipidated: N-palmitoyl cysteine. Cysteine 19 carries S-diacylglycerol cysteine lipidation. The tract at residues 27–51 is disordered; that stretch reads TGGGSVSPSSIVTGVSMGSDGVGNP.

It is found in the cell outer membrane. Its function is as follows. Lysis proteins are required for both colicin release and partial cell lysis. This is Lysis protein for colicin A (cal) from Citrobacter freundii.